The following is a 314-amino-acid chain: Methionyl-tRNA formyltransferase (314 aa).

110-113 (SLLP) serves as a coordination point for (6S)-5,6,7,8-tetrahydrofolate.

Belongs to the Fmt family.

The enzyme catalyses L-methionyl-tRNA(fMet) + (6R)-10-formyltetrahydrofolate = N-formyl-L-methionyl-tRNA(fMet) + (6S)-5,6,7,8-tetrahydrofolate + H(+). Attaches a formyl group to the free amino group of methionyl-tRNA(fMet). The formyl group appears to play a dual role in the initiator identity of N-formylmethionyl-tRNA by promoting its recognition by IF2 and preventing the misappropriation of this tRNA by the elongation apparatus. The protein is Methionyl-tRNA formyltransferase of Lactobacillus acidophilus (strain ATCC 700396 / NCK56 / N2 / NCFM).